The following is a 1617-amino-acid chain: ATP-binding cassette sub-family A member 6 (1617 aa).

A helical transmembrane segment spans residues 31–51 (LLEWGLSILLGLCIALFSSSM). Residues Asn84 and Asn109 are each glycosylated (N-linked (GlcNAc...) asparagine). The next 6 helical transmembrane spans lie at 222–242 (MFILFFLLHFSPLVYFISLNV), 268–288 (GLIYAGFIFIISIFVTIIITF), 297–317 (FMVIFILFFLYGLSLVALVFL), 327–347 (LTNLVVFLLTLFWGCLGFTVF), 355–375 (LEWILNICSPFAFTTGMIQII), and 397–417 (IATFSMLLLDGLIYLLLALYF). Residues 478-713 (IRIRNVKKEY…WGLGYHLSLH (236 aa)) form the ABC transporter 1 domain. 514–521 (GHSGAGKS) contacts ATP. A helical transmembrane segment spans residues 854–874 (VLLTLLLVFGIAIFPLIVENI). N-linked (GlcNAc...) asparagine glycosylation occurs at Asn940. Transmembrane regions (helical) follow at residues 1007–1027 (IGLWTGLPDGSFFLFLVLCSI), 1062–1082 (ALVDVSFFILILLLMYLIFYI), 1094–1114 (IVFALVIVTPGYAASLVFFIY), 1127–1147 (SGLWSFYFFFASTIMFSITLI), 1150–1170 (FDLSILITTMVLVPSYTLLGF), and 1194–1214 (ATDFLVCFIPYFQTLLFVFVL). One can recognise an ABC transporter 2 domain in the interval 1288–1513 (GQKKSCFSKR…LGKDYILELK (226 aa)). Residue 1320 to 1327 (GPNGAGKS) coordinates ATP.

This sequence belongs to the ABC transporter superfamily. ABCA family. Widely expressed with higher expression in liver.

Its subcellular location is the golgi apparatus membrane. Its function is as follows. Probable transporter which may play a role in macrophage lipid transport and homeostasis. The sequence is that of ATP-binding cassette sub-family A member 6 (ABCA6) from Homo sapiens (Human).